Consider the following 210-residue polypeptide: Uridine kinase (210 aa).

Residue 14–21 participates in ATP binding; the sequence is GGSGSGKT.

The protein belongs to the uridine kinase family.

Its subcellular location is the cytoplasm. It catalyses the reaction uridine + ATP = UMP + ADP + H(+). The catalysed reaction is cytidine + ATP = CMP + ADP + H(+). The protein operates within pyrimidine metabolism; CTP biosynthesis via salvage pathway; CTP from cytidine: step 1/3. Its pathway is pyrimidine metabolism; UMP biosynthesis via salvage pathway; UMP from uridine: step 1/1. The protein is Uridine kinase of Deinococcus radiodurans (strain ATCC 13939 / DSM 20539 / JCM 16871 / CCUG 27074 / LMG 4051 / NBRC 15346 / NCIMB 9279 / VKM B-1422 / R1).